A 463-amino-acid polypeptide reads, in one-letter code: Asparagine--tRNA ligase (463 aa).

This sequence belongs to the class-II aminoacyl-tRNA synthetase family. Homodimer.

It is found in the cytoplasm. It carries out the reaction tRNA(Asn) + L-asparagine + ATP = L-asparaginyl-tRNA(Asn) + AMP + diphosphate + H(+). This chain is Asparagine--tRNA ligase, found in Clostridium tetani (strain Massachusetts / E88).